The primary structure comprises 433 residues: Histone acetyltransferase type B subunit 2 (433 aa).

5 WD repeats span residues Asn134 to Ser174, Gly187 to Asn227, Gly237 to Lys277, Ala282 to His322, and Ser326 to Thr366. The tract at residues Asp368–Asp372 is interaction with the histone H4 N-terminus. One copy of the WD 6 repeat lies at Gly383–Glu433.

Belongs to the WD repeat RBAP46/RBAP48/MSI1 family. Component of the HAT-B complex composed of at least HAT1 and HAT2. The HAT-B complex binds to histone H4 tail.

Its subcellular location is the cytoplasm. It is found in the nucleus. In terms of biological role, regulatory subunit of the histone acetylase B (HAT-B) complex. The complex acetylates 'Lys-12' of histone H4 which is required for telomeric silencing. This is Histone acetyltransferase type B subunit 2 (HAT2) from Mycosarcoma maydis (Corn smut fungus).